The primary structure comprises 606 residues: Fructan 6-exohydrolase (606 aa).

An N-terminal signal peptide occupies residues methionine 1–glycine 21. An N-linked (GlcNAc...) asparagine glycan is attached at asparagine 5. Aspartate 70 is a catalytic residue. N-linked (GlcNAc...) asparagine glycans are attached at residues asparagine 110, asparagine 164, asparagine 193, asparagine 237, and asparagine 346. Residues cysteine 445 and cysteine 491 are joined by a disulfide bond. 4 N-linked (GlcNAc...) asparagine glycosylation sites follow: asparagine 564, asparagine 585, asparagine 590, and asparagine 593.

Belongs to the glycosyl hydrolase 32 family.

It carries out the reaction Hydrolysis of terminal, non-reducing (2-&gt;6)-linked beta-D-fructofuranose residues in fructans.. With respect to regulation, not inhibited by sucrose. In terms of biological role, hydrolyzes levan-type beta-(2-&gt;6)-linked fructans to fructose, but not inulin-type beta-(2-&gt;1)-linked fructans. The chain is Fructan 6-exohydrolase from Beta vulgaris (Sugar beet).